Consider the following 181-residue polypeptide: ATP synthase subunit delta (181 aa).

It belongs to the ATPase delta chain family. In terms of assembly, F-type ATPases have 2 components, F(1) - the catalytic core - and F(0) - the membrane proton channel. F(1) has five subunits: alpha(3), beta(3), gamma(1), delta(1), epsilon(1). F(0) has three main subunits: a(1), b(2) and c(10-14). The alpha and beta chains form an alternating ring which encloses part of the gamma chain. F(1) is attached to F(0) by a central stalk formed by the gamma and epsilon chains, while a peripheral stalk is formed by the delta and b chains.

It localises to the cell membrane. F(1)F(0) ATP synthase produces ATP from ADP in the presence of a proton or sodium gradient. F-type ATPases consist of two structural domains, F(1) containing the extramembraneous catalytic core and F(0) containing the membrane proton channel, linked together by a central stalk and a peripheral stalk. During catalysis, ATP synthesis in the catalytic domain of F(1) is coupled via a rotary mechanism of the central stalk subunits to proton translocation. Functionally, this protein is part of the stalk that links CF(0) to CF(1). It either transmits conformational changes from CF(0) to CF(1) or is implicated in proton conduction. This Mycoplasmoides gallisepticum (strain R(low / passage 15 / clone 2)) (Mycoplasma gallisepticum) protein is ATP synthase subunit delta.